The sequence spans 147 residues: Hemoglobin subunit epsilon (147 aa).

The Globin domain occupies 3-147 (HLTAEEKSSV…VATALAHKYH (145 aa)). 2 positions are modified to phosphoserine: Ser-14 and Ser-51. Residues His-64 and His-93 each contribute to the heme b site.

Belongs to the globin family. As to quaternary structure, heterotetramer of two alpha chains and two epsilon chains in early embryonic hemoglobin Gower-2; two zeta chains and two epsilon chains in early embryonic hemoglobin Gower-1. Red blood cells.

Functionally, the epsilon chain is a beta-type chain of early mammalian embryonic hemoglobin. This chain is Hemoglobin subunit epsilon (HBE1), found in Carlito syrichta (Philippine tarsier).